The following is a 136-amino-acid chain: Piercer of microtubule wall 1 protein (136 aa).

Residues 1-16 show a composition bias toward basic and acidic residues; that stretch reads MSEEDPKACAEPEEPK. The tract at residues 1–27 is disordered; that stretch reads MSEEDPKACAEPEEPKAGPPPEKTSDW.

This sequence belongs to the PIERCE1 family. In terms of assembly, microtubule inner protein component of sperm flagellar doublet microtubules. Interacts with CFAP53, ODAD1 and ODAD3; the interactions link the outer dynein arms docking complex (ODA-DC) to the internal microtubule inner proteins (MIP) in cilium axoneme. In terms of tissue distribution, expressed in trachea multiciliated cells.

Its subcellular location is the cytoplasm. The protein resides in the cytoskeleton. The protein localises to the cilium axoneme. It localises to the flagellum axoneme. In terms of biological role, microtubule inner protein involved in the attachment of outer dynein arms (ODAs) to dynein-decorated doublet microtubules (DMTs) in cilia axoneme, which is required for motile cilia beating. Functions at the initial step of left-right asymmetry specification of the visceral organs. This chain is Piercer of microtubule wall 1 protein (PIERCE1), found in Bos taurus (Bovine).